The sequence spans 122 residues: Small ribosomal subunit protein uS13 (122 aa).

The interval 95-122 (GLPVRGQRTHTNARTRKGKAKPIAGKKK) is disordered.

This sequence belongs to the universal ribosomal protein uS13 family. Part of the 30S ribosomal subunit. Forms a loose heterodimer with protein S19. Forms two bridges to the 50S subunit in the 70S ribosome.

Located at the top of the head of the 30S subunit, it contacts several helices of the 16S rRNA. In the 70S ribosome it contacts the 23S rRNA (bridge B1a) and protein L5 of the 50S subunit (bridge B1b), connecting the 2 subunits; these bridges are implicated in subunit movement. Contacts the tRNAs in the A and P-sites. This is Small ribosomal subunit protein uS13 from Zymomonas mobilis subsp. mobilis (strain ATCC 31821 / ZM4 / CP4).